Reading from the N-terminus, the 434-residue chain is Glutamate-1-semialdehyde 2,1-aminomutase 1 (434 aa).

At lysine 270 the chain carries N6-(pyridoxal phosphate)lysine.

It belongs to the class-III pyridoxal-phosphate-dependent aminotransferase family. HemL subfamily. As to quaternary structure, homodimer. It depends on pyridoxal 5'-phosphate as a cofactor.

The protein resides in the cytoplasm. It carries out the reaction (S)-4-amino-5-oxopentanoate = 5-aminolevulinate. It functions in the pathway porphyrin-containing compound metabolism; protoporphyrin-IX biosynthesis; 5-aminolevulinate from L-glutamyl-tRNA(Glu): step 2/2. This Bacillus anthracis (strain CDC 684 / NRRL 3495) protein is Glutamate-1-semialdehyde 2,1-aminomutase 1.